The chain runs to 222 residues: Protein GrpE (222 aa).

The interval 1 to 64 (MSDQNLGQGS…GEEILSDDDL (64 aa)) is disordered. Residues 16-44 (EEPIVRDKRRIDPETGKVREPQDLSHEEL) are compositionally biased toward basic and acidic residues. Over residues 54–64 (QGEEILSDDDL) the composition is skewed to acidic residues.

It belongs to the GrpE family. As to quaternary structure, homodimer.

It is found in the cytoplasm. Its function is as follows. Participates actively in the response to hyperosmotic and heat shock by preventing the aggregation of stress-denatured proteins, in association with DnaK and GrpE. It is the nucleotide exchange factor for DnaK and may function as a thermosensor. Unfolded proteins bind initially to DnaJ; upon interaction with the DnaJ-bound protein, DnaK hydrolyzes its bound ATP, resulting in the formation of a stable complex. GrpE releases ADP from DnaK; ATP binding to DnaK triggers the release of the substrate protein, thus completing the reaction cycle. Several rounds of ATP-dependent interactions between DnaJ, DnaK and GrpE are required for fully efficient folding. The protein is Protein GrpE of Leifsonia xyli subsp. xyli (strain CTCB07).